Reading from the N-terminus, the 4555-residue chain is Protocadherin Fat 3 (4555 aa).

The first 31 residues, 1 to 31, serve as a signal peptide directing secretion; that stretch reads MGVTMRHCIDTRPPSCLIFLLLKLCATVSQG. The Extracellular segment spans residues 32-4153; it reads LPGTGPLGFH…AGHSYVGKEE (4122 aa). 33 Cadherin domains span residues 43–157, 158–265, 263–374, 376–471, 472–577, 578–680, 726–830, 831–935, 936–1042, 1043–1147, 1148–1253, 1254–1358, 1362–1459, 1460–1565, 1566–1768, 1769–1882, 1883–1985, 1982–2083, 2084–2185, 2186–2286, 2287–2393, 2394–2495, 2496–2599, 2600–2707, 2708–2813, 2814–2923, 2924–3028, 3029–3130, 3131–3235, 3236–3340, 3341–3445, 3446–3550, and 3551–3652; these read THAL…RPLF, SPTT…APII, PIIH…TPIK, EKDV…TPEF, QETL…SPLF, EKVA…SKSF, KSFP…SPVF, LQDS…SPAF, IPSS…TPYF, PDFA…APLT, SEPI…KPQF, PEKV…SPIP, DEPF…GPEF, SQPH…SPYF, TNPL…PPVF, LFSQ…PPVF, TQAV…TQSF, TQSF…SPVF, VGLP…MPVF, DKPF…PPVF, DQPT…PPVF, NQLI…SPAF, SQST…APQF, MTLE…LPSF, TQSQ…KPVF, ETSS…APVF, AHEV…SPVC, DQVA…PPVF, SSNH…PPVF, ERRD…PPRF, SQDV…SPVF, TPAN…KPTA, and IPLE…TIRF. An N-linked (GlcNAc...) asparagine glycan is attached at N48. N341 carries N-linked (GlcNAc...) asparagine glycosylation. N-linked (GlcNAc...) asparagine glycosylation is found at N481, N562, N667, N799, N879, N898, and N1006. Residues N1367 and N1429 are each glycosylated (N-linked (GlcNAc...) asparagine). N1751 is a glycosylation site (N-linked (GlcNAc...) asparagine). 3 N-linked (GlcNAc...) asparagine glycosylation sites follow: N1944, N1993, and N1996. 4 N-linked (GlcNAc...) asparagine glycosylation sites follow: N2208, N2292, N2331, and N2467. The N-linked (GlcNAc...) asparagine glycan is linked to N2734. N3000 carries an N-linked (GlcNAc...) asparagine glycan. N3201 carries an N-linked (GlcNAc...) asparagine glycan. N-linked (GlcNAc...) asparagine glycans are attached at residues N3449, N3618, and N3741. An EGF-like 1 domain is found at 3794-3832; the sequence is SNDPCVEKPCPEDMQCVGYEASRRPFLCQCPPGKLGECS. 3 disulfide bridges follow: C3798-C3809, C3803-C3821, and C3823-C3831. The 184-residue stretch at 3834–4017 folds into the Laminin G-like domain; sequence HTSLSFAGNS…VGLTELKLGC (184 aa). The N-linked (GlcNAc...) asparagine glycan is linked to N3926. 10 disulfide bridges follow: C3984/C4017, C4024/C4035, C4029/C4045, C4047/C4056, C4063/C4074, C4068/C4083, C4085/C4094, C4101/C4112, C4106/C4121, and C4123/C4132. EGF-like domains lie at 4020-4057 and 4059-4095; these read YPDA…TNCE and EITA…VTCE. The 37-residue stretch at 4097 to 4133 folds into the EGF-like 4; calcium-binding domain; the sequence is DVDECEREECENGGSCVNLFGSFFCNCTPGYVGQYCG. Residues 4154 to 4174 traverse the membrane as a helical segment; it reads LIGIAVVLFVIFTLIVLFIVF. Topologically, residues 4175–4555 are cytoplasmic; it reads RKKVFRKNYS…FVETQHQTQV (381 aa). The span at 4326–4343 shows a compositional bias: polar residues; sequence SNKGSNSEVQSLNSFQSD. Disordered regions lie at residues 4326–4347, 4395–4424, and 4452–4472; these read SNKG…SGDD, GGYD…LPED, and PRFH…TDLG. R4508 and R4518 each carry omega-N-methylarginine.

Restricted to the nervous system. Abundantly expressed in the fetal brain.

It is found in the membrane. May play a role in the interactions between neurites derived from specific subsets of neurons during development. The chain is Protocadherin Fat 3 (Fat3) from Rattus norvegicus (Rat).